The chain runs to 428 residues: Adenylosuccinate synthetase (428 aa).

GTP contacts are provided by residues 12-18 and 40-42; these read GDEGKGK and GHT. Catalysis depends on Asp13, which acts as the Proton acceptor. Mg(2+) contacts are provided by Asp13 and Gly40. Residues 13-16, 38-41, Thr128, Arg142, Gln222, Thr237, and Arg301 contribute to the IMP site; these read DEGK and NAGH. His41 serves as the catalytic Proton donor. Position 297–303 (297–303) interacts with substrate; the sequence is TVTGRSR. GTP-binding positions include Arg303, 329–331, and 411–413; these read KLD and STS.

Belongs to the adenylosuccinate synthetase family. Homodimer. Mg(2+) is required as a cofactor.

The protein localises to the cytoplasm. It catalyses the reaction IMP + L-aspartate + GTP = N(6)-(1,2-dicarboxyethyl)-AMP + GDP + phosphate + 2 H(+). It functions in the pathway purine metabolism; AMP biosynthesis via de novo pathway; AMP from IMP: step 1/2. Functionally, plays an important role in the de novo pathway of purine nucleotide biosynthesis. Catalyzes the first committed step in the biosynthesis of AMP from IMP. This chain is Adenylosuccinate synthetase, found in Phenylobacterium zucineum (strain HLK1).